Here is a 126-residue protein sequence, read N- to C-terminus: Protein ApaG (126 aa).

Residues Ser-2–His-126 form the ApaG domain.

This Pseudomonas fluorescens (strain Pf0-1) protein is Protein ApaG.